The primary structure comprises 362 residues: MSGRELRHGYTTGACAAAAAAGAARMLRRQELADEAEIVLPRGERVAFRLHGQEFTETWATCHVVKDAGDDPDVTNGAEIHATVRREALNRPGARTMVFVTGGRGVGTITKPGLAVPVGEPAINPVPMRMITEAVKAEFSVVCLPQILTVTVSIPNGEELAKKTLNARLGIVGGLSILGTTGIVRPISAKAWTDTLDAAIDVALACGCRTLVLSTGRTSELVVQGALAGEHLREEACVMMGDHVGYALRACARKGAEQAVLAGQFAKLLKIACGHEQTHVSSSELDLRLLAEWIAATPAASHLASLVEGANTARQVLEASGNDPALMELVCSRAREAARLLAPSLRIKVLLAGYDSTVLYFG.

Belongs to the CbiD family.

It carries out the reaction Co-precorrin-5B + S-adenosyl-L-methionine = Co-precorrin-6A + S-adenosyl-L-homocysteine. The protein operates within cofactor biosynthesis; adenosylcobalamin biosynthesis; cob(II)yrinate a,c-diamide from sirohydrochlorin (anaerobic route): step 6/10. Its function is as follows. Catalyzes the methylation of C-1 in cobalt-precorrin-5B to form cobalt-precorrin-6A. In Geobacter sulfurreducens (strain ATCC 51573 / DSM 12127 / PCA), this protein is Cobalt-precorrin-5B C(1)-methyltransferase.